Here is a 160-residue protein sequence, read N- to C-terminus: Growth arrest and DNA damage-inducible protein GADD45 beta (160 aa).

It belongs to the GADD45 family. In terms of assembly, interacts with GADD45GIP1.

Involved in the regulation of growth and apoptosis. Mediates activation of stress-responsive MTK1/MEKK4 MAPKKK. In Bos taurus (Bovine), this protein is Growth arrest and DNA damage-inducible protein GADD45 beta (GADD45B).